A 476-amino-acid chain; its full sequence is Bifunctional protein HldE (476 aa).

The ribokinase stretch occupies residues 1 to 320; that stretch reads MQNPHIPSFA…RAVHQEGGSG (320 aa). 196-199 is a binding site for ATP; it reads NLSE. The active site involves Asp265. The segment at 345–476 is cytidylyltransferase; sequence FTNGCFDIIH…KIVERIREKD (132 aa).

This sequence in the N-terminal section; belongs to the carbohydrate kinase PfkB family. The protein in the C-terminal section; belongs to the cytidylyltransferase family. In terms of assembly, homodimer.

The catalysed reaction is D-glycero-beta-D-manno-heptose 7-phosphate + ATP = D-glycero-beta-D-manno-heptose 1,7-bisphosphate + ADP + H(+). The enzyme catalyses D-glycero-beta-D-manno-heptose 1-phosphate + ATP + H(+) = ADP-D-glycero-beta-D-manno-heptose + diphosphate. Its pathway is nucleotide-sugar biosynthesis; ADP-L-glycero-beta-D-manno-heptose biosynthesis; ADP-L-glycero-beta-D-manno-heptose from D-glycero-beta-D-manno-heptose 7-phosphate: step 1/4. It functions in the pathway nucleotide-sugar biosynthesis; ADP-L-glycero-beta-D-manno-heptose biosynthesis; ADP-L-glycero-beta-D-manno-heptose from D-glycero-beta-D-manno-heptose 7-phosphate: step 3/4. Catalyzes the phosphorylation of D-glycero-D-manno-heptose 7-phosphate at the C-1 position to selectively form D-glycero-beta-D-manno-heptose-1,7-bisphosphate. In terms of biological role, catalyzes the ADP transfer from ATP to D-glycero-beta-D-manno-heptose 1-phosphate, yielding ADP-D-glycero-beta-D-manno-heptose. The polypeptide is Bifunctional protein HldE (Alcanivorax borkumensis (strain ATCC 700651 / DSM 11573 / NCIMB 13689 / SK2)).